A 175-amino-acid polypeptide reads, in one-letter code: Photosynthetic NDH subunit of subcomplex B 4, chloroplastic (175 aa).

The transit peptide at Met-1–Lys-24 directs the protein to the chloroplast. A helical membrane pass occupies residues Val-95–Gly-111.

Part of the chloroplast NDH complex, composed of a mixture of chloroplast and nucleus encoded subunits. Component of the NDH subcomplex B, at least composed of PnsB1, PnsB2, PnsB3, PnsB4 and PnsB5.

The protein localises to the plastid. The protein resides in the chloroplast thylakoid membrane. Its function is as follows. NDH shuttles electrons from NAD(P)H:plastoquinone, via FMN and iron-sulfur (Fe-S) centers, to quinones in the photosynthetic chain and possibly in a chloroplast respiratory chain. The immediate electron acceptor for the enzyme in this species is believed to be plastoquinone. Couples the redox reaction to proton translocation, and thus conserves the redox energy in a proton gradient. The protein is Photosynthetic NDH subunit of subcomplex B 4, chloroplastic of Arabidopsis thaliana (Mouse-ear cress).